The following is an 837-amino-acid chain: CoA-transferase/lyase DddD (837 aa).

Catalysis depends on aspartate 602, which acts as the Nucleophile.

The protein belongs to the CoA-transferase III family.

Functionally, dimethyl sulfide (DMS)-producing enzyme. Acts both as a transferase and a lyase: uses acetyl-coenzyme A (acetyl-coA) and dimethylsulfoniopropionate (DMSP) as substrates to produce DMS, acetate and 3-hydroxypropionate-CoA (3HP-CoA). Mediates the CoA-transferase prior to lyase activity. DMS is the principal form by which sulfur is transported from oceans to the atmosphere and is a key component of the ocean sulfur cycle. This chain is CoA-transferase/lyase DddD, found in Marinomonas sp. (strain MWYL1).